Consider the following 182-residue polypeptide: UPF0397 protein BCQ_2505 (182 aa).

5 consecutive transmembrane segments (helical) span residues V9–I29, A40–I60, W71–I91, I114–V134, and I142–L162.

It belongs to the UPF0397 family.

It is found in the cell membrane. The sequence is that of UPF0397 protein BCQ_2505 from Bacillus cereus (strain Q1).